The chain runs to 174 residues: Methylated-DNA--protein-cysteine methyltransferase (174 aa).

Residue Cys-141 is the Nucleophile; methyl group acceptor of the active site.

This sequence belongs to the MGMT family.

It localises to the cytoplasm. The enzyme catalyses a 6-O-methyl-2'-deoxyguanosine in DNA + L-cysteinyl-[protein] = S-methyl-L-cysteinyl-[protein] + a 2'-deoxyguanosine in DNA. It catalyses the reaction a 4-O-methyl-thymidine in DNA + L-cysteinyl-[protein] = a thymidine in DNA + S-methyl-L-cysteinyl-[protein]. Its function is as follows. Involved in the cellular defense against the biological effects of O6-methylguanine (O6-MeG) and O4-methylthymine (O4-MeT) in DNA. Repairs the methylated nucleobase in DNA by stoichiometrically transferring the methyl group to a cysteine residue in the enzyme. This is a suicide reaction: the enzyme is irreversibly inactivated. The polypeptide is Methylated-DNA--protein-cysteine methyltransferase (Thermococcus kodakarensis (strain ATCC BAA-918 / JCM 12380 / KOD1) (Pyrococcus kodakaraensis (strain KOD1))).